A 392-amino-acid polypeptide reads, in one-letter code: Meiotically up-regulated gene 11 protein (392 aa).

It localises to the cytoplasm. The protein resides in the nucleus. Its function is as follows. Has a role in meiosis. This Schizosaccharomyces pombe (strain 972 / ATCC 24843) (Fission yeast) protein is Meiotically up-regulated gene 11 protein (mug11).